Here is a 128-residue protein sequence, read N- to C-terminus: Small ribosomal subunit protein uS9c (128 aa).

The interval 106–128 (SRIKERKKYGLKKARKAPQFSKR) is disordered. Positions 109–128 (KERKKYGLKKARKAPQFSKR) are enriched in basic residues.

This sequence belongs to the universal ribosomal protein uS9 family.

The protein resides in the plastid. It localises to the chloroplast. This Cyanidium caldarium (Red alga) protein is Small ribosomal subunit protein uS9c (rps9).